The following is a 547-amino-acid chain: Membrane transporter D1 (547 aa).

At 1–2 (MR) the chain is on the cytoplasmic side. Residues 3–25 (ASVMLCAALGGFLFGYDTGVINA) traverse the membrane as a helical segment. Topologically, residues 26-43 (ALFQMKDHFGFSEHSWQY) are extracellular. A helical transmembrane segment spans residues 44-64 (ALIVAIAIAGAFVGAFISGFI). At 65–78 (SAAFGRRPCIAVAD) the chain is on the cytoplasmic side. The chain crosses the membrane as a helical span at residues 79–99 (ALFVIGSVLMGAAPNVEVVLV). The Extracellular portion of the chain corresponds to 100 to 101 (SR). Residues 102-122 (VIVGLAIGISSATIPVYLAEV) form a helical membrane-spanning segment. The Cytoplasmic segment spans residues 123-136 (TSPKHRGATIVLNN). A helical membrane pass occupies residues 137-157 (LFLTGGQFVAAGFTAIMVVFT). Residues 158–164 (SKNIGWR) lie on the Extracellular side of the membrane. Residues 165–185 (VAIGIGALPAVVQAFCLLFFL) form a helical membrane-spanning segment. At 186-245 (PESPRWLLSKGHADRAKAVADKFEVDLCEFQEGDELPSVRIDYRPLMARDMRFRVVLSSG) the chain is on the cytoplasmic side. A helical membrane pass occupies residues 246 to 266 (LQIIQQFSGINTIMYYSSVIL). The Extracellular portion of the chain corresponds to 267–276 (YDAGFRDAIM). The helical transmembrane segment at 277-297 (PVVLSIPLAFMNALFTAVAIF) threads the bilayer. Residues 298–308 (TVDRFGRRRML) lie on the Cytoplasmic side of the membrane. Residues 309–329 (LISVFGCLVLLVVIAIIGFFI) form a helical membrane-spanning segment. Topologically, residues 330–339 (GTRISYSVGG) are extracellular. The helical transmembrane segment at 340–360 (GLFLALLAVFLALYAPGIGCI) threads the bilayer. The Cytoplasmic segment spans residues 361-385 (PWVIMGEIFPTHLRTSAASVATMAN). A helical transmembrane segment spans residues 386–406 (WGANVLVSQVFPILMGAIGVG). A topological domain (extracellular) is located at residue Gly407. The helical transmembrane segment at 408–428 (TFTIISGLMALGCIFVYFFAV) threads the bilayer. Over 429–547 (ETKGLTLEQI…AIKAAPHEPK (119 aa)) the chain is Cytoplasmic. Disordered stretches follow at residues 449–468 (PPRF…YRED) and 510–547 (VSNK…HEPK). Positions 519 to 529 (TSSSSDPQSLE) are enriched in polar residues.

Belongs to the major facilitator superfamily. Sugar transporter (TC 2.A.1.1) family.

It is found in the membrane. In Leishmania donovani, this protein is Membrane transporter D1.